A 277-amino-acid polypeptide reads, in one-letter code: Large ribosomal subunit protein uL2 (277 aa).

Disordered stretches follow at residues 1–20 (MGIR…SVSD), 27–55 (TQPE…RHRG), and 207–277 (KAGR…RNQS). The span at 27-48 (TQPEKSLTTYKHSSQGRNNRGV) shows a compositional bias: polar residues. Composition is skewed to basic residues over residues 207–220 (KAGR…RPHV) and 259–277 (TRNR…RNQS).

The protein belongs to the universal ribosomal protein uL2 family. As to quaternary structure, part of the 50S ribosomal subunit. Forms a bridge to the 30S subunit in the 70S ribosome.

Functionally, one of the primary rRNA binding proteins. Required for association of the 30S and 50S subunits to form the 70S ribosome, for tRNA binding and peptide bond formation. It has been suggested to have peptidyltransferase activity; this is somewhat controversial. Makes several contacts with the 16S rRNA in the 70S ribosome. This is Large ribosomal subunit protein uL2 from Gloeothece citriformis (strain PCC 7424) (Cyanothece sp. (strain PCC 7424)).